Reading from the N-terminus, the 489-residue chain is Betaine aldehyde dehydrogenase (489 aa).

K(+) is bound by residues Thr-26 and Asp-93. 150 to 152 (GAW) contributes to the NAD(+) binding site. The Charge relay system role is filled by Lys-162. Residue 176-179 (KPSE) participates in NAD(+) binding. Val-180 contacts K(+). An NAD(+)-binding site is contributed by 229-232 (GVET). Residue Leu-245 coordinates K(+). The active-site Proton acceptor is the Glu-251. NAD(+) is bound by residues Gly-253, Cys-285, and Glu-386. The active-site Nucleophile is Cys-285. Cys-285 is subject to Cysteine sulfenic acid (-SOH). K(+)-binding residues include Lys-456 and Gly-459. Catalysis depends on Glu-463, which acts as the Charge relay system.

The protein belongs to the aldehyde dehydrogenase family. Dimer of dimers. Requires K(+) as cofactor.

It carries out the reaction betaine aldehyde + NAD(+) + H2O = glycine betaine + NADH + 2 H(+). Its pathway is amine and polyamine biosynthesis; betaine biosynthesis via choline pathway; betaine from betaine aldehyde: step 1/1. Functionally, involved in the biosynthesis of the osmoprotectant glycine betaine. Catalyzes the irreversible oxidation of betaine aldehyde to the corresponding acid. In Burkholderia orbicola (strain AU 1054), this protein is Betaine aldehyde dehydrogenase.